The following is a 408-amino-acid chain: Acetylornithine aminotransferase (408 aa).

Pyridoxal 5'-phosphate-binding positions include 107–108 (GT) and phenylalanine 141. Arginine 144 provides a ligand contact to N(2)-acetyl-L-ornithine. 227 to 230 (DEIQ) lines the pyridoxal 5'-phosphate pocket. Lysine 256 is modified (N6-(pyridoxal phosphate)lysine). N(2)-acetyl-L-ornithine is bound at residue threonine 284. Threonine 285 contributes to the pyridoxal 5'-phosphate binding site.

It belongs to the class-III pyridoxal-phosphate-dependent aminotransferase family. ArgD subfamily. Homodimer. Pyridoxal 5'-phosphate serves as cofactor.

The protein resides in the cytoplasm. The catalysed reaction is N(2)-acetyl-L-ornithine + 2-oxoglutarate = N-acetyl-L-glutamate 5-semialdehyde + L-glutamate. The protein operates within amino-acid biosynthesis; L-arginine biosynthesis; N(2)-acetyl-L-ornithine from L-glutamate: step 4/4. In Xanthomonas campestris pv. campestris (strain ATCC 33913 / DSM 3586 / NCPPB 528 / LMG 568 / P 25), this protein is Acetylornithine aminotransferase.